The sequence spans 506 residues: ATP synthase subunit alpha (506 aa).

170–177 (GDRQTGKT) lines the ATP pocket.

It belongs to the ATPase alpha/beta chains family. In terms of assembly, F-type ATPases have 2 components, CF(1) - the catalytic core - and CF(0) - the membrane proton channel. CF(1) has five subunits: alpha(3), beta(3), gamma(1), delta(1), epsilon(1). CF(0) has four main subunits: a(1), b(1), b'(1) and c(9-12).

The protein resides in the cellular thylakoid membrane. It catalyses the reaction ATP + H2O + 4 H(+)(in) = ADP + phosphate + 5 H(+)(out). Produces ATP from ADP in the presence of a proton gradient across the membrane. The alpha chain is a regulatory subunit. The protein is ATP synthase subunit alpha of Synechococcus sp. (strain JA-3-3Ab) (Cyanobacteria bacterium Yellowstone A-Prime).